A 371-amino-acid chain; its full sequence is Probable beta-1,4-xylosyltransferase GT43A (371 aa).

Over 1 to 19 (MGTAAVAAAERPKQRRSSH) the chain is Cytoplasmic. A helical; Signal-anchor for type II membrane protein transmembrane segment spans residues 20 to 42 (LWKKALLHFSLCFVMGFFTGFAP). Topologically, residues 43-371 (SSSSSWRAGS…TSTPKTHNRR (329 aa)) are lumenal. 2 N-linked (GlcNAc...) asparagine glycosylation sites follow: Asn-176 and Asn-299.

It belongs to the glycosyltransferase 43 family.

The protein localises to the golgi apparatus membrane. In terms of biological role, probable beta-1,4-xylosyltransferase involved in xylan biosynthesis in cell walls. This Oryza sativa subsp. japonica (Rice) protein is Probable beta-1,4-xylosyltransferase GT43A.